A 285-amino-acid polypeptide reads, in one-letter code: Nucleotide-binding protein Gmet_1286 (285 aa).

8 to 15 is an ATP binding site; that stretch reads GLSGSGKS. 59-62 contributes to the GTP binding site; sequence DIRG.

The protein belongs to the RapZ-like family.

Its function is as follows. Displays ATPase and GTPase activities. The polypeptide is Nucleotide-binding protein Gmet_1286 (Geobacter metallireducens (strain ATCC 53774 / DSM 7210 / GS-15)).